Here is an 879-residue protein sequence, read N- to C-terminus: Alanine--tRNA ligase (879 aa).

Zn(2+) contacts are provided by H566, H570, C668, and H672.

Belongs to the class-II aminoacyl-tRNA synthetase family. It depends on Zn(2+) as a cofactor.

It is found in the cytoplasm. It carries out the reaction tRNA(Ala) + L-alanine + ATP = L-alanyl-tRNA(Ala) + AMP + diphosphate. In terms of biological role, catalyzes the attachment of alanine to tRNA(Ala) in a two-step reaction: alanine is first activated by ATP to form Ala-AMP and then transferred to the acceptor end of tRNA(Ala). Also edits incorrectly charged Ser-tRNA(Ala) and Gly-tRNA(Ala) via its editing domain. The sequence is that of Alanine--tRNA ligase from Listeria welshimeri serovar 6b (strain ATCC 35897 / DSM 20650 / CCUG 15529 / CIP 8149 / NCTC 11857 / SLCC 5334 / V8).